Consider the following 209-residue polypeptide: Uracil phosphoribosyltransferase (209 aa).

5-phospho-alpha-D-ribose 1-diphosphate is bound by residues arginine 79, arginine 104, and 131–139; that span reads DPMLATGGS. Uracil-binding positions include isoleucine 194 and 199–201; that span reads GDA. Aspartate 200 is a 5-phospho-alpha-D-ribose 1-diphosphate binding site.

This sequence belongs to the UPRTase family. Mg(2+) serves as cofactor.

The catalysed reaction is UMP + diphosphate = 5-phospho-alpha-D-ribose 1-diphosphate + uracil. The protein operates within pyrimidine metabolism; UMP biosynthesis via salvage pathway; UMP from uracil: step 1/1. With respect to regulation, allosterically activated by GTP. Functionally, catalyzes the conversion of uracil and 5-phospho-alpha-D-ribose 1-diphosphate (PRPP) to UMP and diphosphate. This is Uracil phosphoribosyltransferase from Clostridium novyi (strain NT).